The primary structure comprises 238 residues: Large ribosomal subunit protein uL1 (238 aa).

Belongs to the universal ribosomal protein uL1 family. Part of the 50S ribosomal subunit.

Functionally, binds directly to 23S rRNA. The L1 stalk is quite mobile in the ribosome, and is involved in E site tRNA release. In terms of biological role, protein L1 is also a translational repressor protein, it controls the translation of the L11 operon by binding to its mRNA. The protein is Large ribosomal subunit protein uL1 of Rickettsia prowazekii (strain Madrid E).